Consider the following 49-residue polypeptide: Photosystem II reaction center protein K (49 aa).

The propeptide occupies 1–12; it reads MISSIHLRKLLG. Residues 24–44 traverse the membrane as a helical segment; that stretch reads IIDVLPIIPVLFLLLAFVWQA.

This sequence belongs to the PsbK family. As to quaternary structure, PSII is composed of 1 copy each of membrane proteins PsbA, PsbB, PsbC, PsbD, PsbE, PsbF, PsbH, PsbI, PsbJ, PsbK, PsbL, PsbM, PsbT, PsbX, PsbY, PsbZ, Psb30/Ycf12, at least 3 peripheral proteins of the oxygen-evolving complex and a large number of cofactors. It forms dimeric complexes.

The protein localises to the plastid. The protein resides in the chloroplast thylakoid membrane. One of the components of the core complex of photosystem II (PSII). PSII is a light-driven water:plastoquinone oxidoreductase that uses light energy to abstract electrons from H(2)O, generating O(2) and a proton gradient subsequently used for ATP formation. It consists of a core antenna complex that captures photons, and an electron transfer chain that converts photonic excitation into a charge separation. This is Photosystem II reaction center protein K from Phacus acuminatus.